The following is a 131-amino-acid chain: Fluoride-specific ion channel FluC 1 (131 aa).

Transmembrane regions (helical) follow at residues 4–24, 40–60, 73–93, and 108–128; these read LALP…GAWL, HWGT…VLAL, LILL…TFAV, and LVLA…GVGL. 2 residues coordinate Na(+): Gly-83 and Ser-86.

It belongs to the fluoride channel Fluc/FEX (TC 1.A.43) family.

It is found in the cell inner membrane. It catalyses the reaction fluoride(in) = fluoride(out). Na(+) is not transported, but it plays an essential structural role and its presence is essential for fluoride channel function. Fluoride-specific ion channel. Important for reducing fluoride concentration in the cell, thus reducing its toxicity. The sequence is that of Fluoride-specific ion channel FluC 1 from Prochlorococcus marinus (strain MIT 9313).